We begin with the raw amino-acid sequence, 141 residues long: ATP synthase F(0) complex subunit C2, mitochondrial (141 aa).

The N-terminal 66 residues, 1–66, are a transit peptide targeting the mitochondrion; the sequence is MFACSKFVST…RSFQTSAISR (66 aa). The helical transmembrane segment at 82 to 102 threads the bilayer; that stretch reads VGVAGSGAGIGTVFGSLIIGY. The residue at position 109 (K109) is an N6,N6,N6-trimethyllysine. The helical transmembrane segment at 117–137 threads the bilayer; it reads ILGFALSEAMGLFCLMVAFLI.

It belongs to the ATPase C chain family. In terms of assembly, F-type ATPases have 2 components, CF(1) - the catalytic core - and CF(0) - the membrane proton channel. CF(1) has five subunits: alpha(3), beta(3), gamma(1), delta(1), epsilon(1). CF(0) has three main subunits: a, b and c. Interacts with DNAJC30; interaction is direct. In terms of processing, trimethylated by ATPSCKMT at Lys-109. Methylation is required for proper incorporation of the C subunit into the ATP synthase complex and mitochondrial respiration.

The protein resides in the mitochondrion membrane. Its function is as follows. Mitochondrial membrane ATP synthase (F(1)F(0) ATP synthase or Complex V) produces ATP from ADP in the presence of a proton gradient across the membrane which is generated by electron transport complexes of the respiratory chain. F-type ATPases consist of two structural domains, F(1) - containing the extramembraneous catalytic core and F(0) - containing the membrane proton channel, linked together by a central stalk and a peripheral stalk. During catalysis, ATP synthesis in the catalytic domain of F(1) is coupled via a rotary mechanism of the central stalk subunits to proton translocation. Part of the complex F(0) domain. A homomeric c-ring of probably 10 subunits is part of the complex rotary element. This is ATP synthase F(0) complex subunit C2, mitochondrial from Homo sapiens (Human).